Consider the following 313-residue polypeptide: Olfactory receptor 4M2 (313 aa).

Residues 1 to 25 (METANYTKVTEFVLTGLSQTPEVQL) are Extracellular-facing. An N-linked (GlcNAc...) asparagine glycan is attached at Asn-5. A helical transmembrane segment spans residues 26 to 49 (VLFVIFLSFYLFILPGNILIICTI). Over 50–57 (SLDPHLTS) the chain is Cytoplasmic. Residues 58–79 (PMYFLLANLAFLDIWYSSITAP) traverse the membrane as a helical segment. Residues 80–100 (EMLIDFFVERKIISFDGCIAQ) lie on the Extracellular side of the membrane. Cys-97 and Cys-189 form a disulfide bridge. Residues 101 to 120 (LFFLHFAGASEMFLLTVMAF) traverse the membrane as a helical segment. At 121–139 (DLYTAICRPLHYATIMNQR) the chain is on the cytoplasmic side. A helical transmembrane segment spans residues 140–158 (LCCILVALSWRGGFIHSII). Over 159–195 (QVALIVRLPFCGPNELDSYFCDITQVVRIACANTFPE) the chain is Extracellular. The helical transmembrane segment at 196-219 (ELVMICSSGLISVVCLIALLMSYA) threads the bilayer. Topologically, residues 220–237 (FLLALFKKLSGSGENTNR) are cytoplasmic. A helical membrane pass occupies residues 238 to 260 (AMSTCYSHITIVVLMFGPSIYIY). Topologically, residues 261-271 (ARPFDSFSLDK) are extracellular. A helical transmembrane segment spans residues 272–291 (VVSVFNTLIFPLRNPIIYTL). The Cytoplasmic portion of the chain corresponds to 292-313 (RNKEVKAAMRKLVTKYILCKEK).

Belongs to the G-protein coupled receptor 1 family.

The protein resides in the cell membrane. Its function is as follows. Odorant receptor. The protein is Olfactory receptor 4M2 (OR4M2) of Homo sapiens (Human).